Reading from the N-terminus, the 323-residue chain is Small ribosomal subunit protein uS9m (323 aa).

The segment at 298–323 (TRDARKVERKKPGKVKARKSPTWVKR) is disordered. Basic residues predominate over residues 304–323 (VERKKPGKVKARKSPTWVKR).

The protein belongs to the universal ribosomal protein uS9 family.

The protein localises to the mitochondrion. The polypeptide is Small ribosomal subunit protein uS9m (MRPS9) (Debaryomyces hansenii (strain ATCC 36239 / CBS 767 / BCRC 21394 / JCM 1990 / NBRC 0083 / IGC 2968) (Yeast)).